The primary structure comprises 447 residues: Glycogen synthase (447 aa).

R15 contributes to the ADP-alpha-D-glucose binding site.

This sequence belongs to the glycosyltransferase 1 family. Bacterial/plant glycogen synthase subfamily.

The enzyme catalyses [(1-&gt;4)-alpha-D-glucosyl](n) + ADP-alpha-D-glucose = [(1-&gt;4)-alpha-D-glucosyl](n+1) + ADP + H(+). It functions in the pathway glycan biosynthesis; glycogen biosynthesis. Functionally, synthesizes alpha-1,4-glucan chains using ADP-glucose. This chain is Glycogen synthase, found in Deinococcus geothermalis (strain DSM 11300 / CIP 105573 / AG-3a).